Consider the following 392-residue polypeptide: Metallophosphoesterase 1 (392 aa).

Residues 25–45 (KLAALVFAVVLFCEFLIYYLV) traverse the membrane as a helical segment. The a divalent metal cation site is built by Asp-73, Asp-115, Asn-153, His-246, His-300, and His-302. Residues 352–372 (DTVLATYCVAAGLLVVLILVH) traverse the membrane as a helical segment.

This sequence belongs to the metallophosphoesterase superfamily. MPPE1 family. As to quaternary structure, interacts with GPI-anchor proteins (via the GPI portion). Interacts with TMED10. Requires Mn(2+) as cofactor.

Its subcellular location is the endoplasmic reticulum-Golgi intermediate compartment membrane. Its function is as follows. Metallophosphoesterase that catalyzes the removal of a side-chain ethanolamine-phosphate (EtNP) from the second mannose of the GPI-anchor protein intermediate. Participates in the glycan remodeling steps of GPI-anchor maturation to allow an efficient transport of GPI-anchor proteins from the endoplasmic reticulum to the Golgi. The chain is Metallophosphoesterase 1 from Ailuropoda melanoleuca (Giant panda).